Reading from the N-terminus, the 169-residue chain is Styrene-oxide isomerase (169 aa).

Transmembrane regions (helical) follow at residues 13-33, 61-81, 85-105, and 129-149; these read GILM…HLVG, PALN…LGFA, PHLL…FYFF, and FLAL…LAVI.

The protein localises to the membrane. The catalysed reaction is styrene oxide = 2-phenylacetaldehyde. Its pathway is aromatic compound metabolism. In terms of biological role, epoxystyrene isomerase that catalyzes the second step in the aerobic styrene degradation pathway by converting epoxystyrene to phenylacetaldehyde. This chain is Styrene-oxide isomerase (styC), found in Pseudomonas fluorescens.